Here is a 366-residue protein sequence, read N- to C-terminus: CRS2-associated factor 2, mitochondrial (366 aa).

Residues 1–14 constitute a mitochondrion transit peptide; sequence MLLPRDLLLLPWRR. Residues 24-82 are disordered; sequence RRLNHHRAPPFSDPDDDPPFTRLAERPPRAPSKKKKKEEEDQGGRIRPPEPASSDLPFD. Residues 60–71 show a composition bias toward basic and acidic residues; that stretch reads KEEEDQGGRIRP. CRM domains are found at residues 143–241 and 263–359; these read EPLA…QRPQ and DGLT…SVSL.

In terms of assembly, part of large ribonucleo-protein complexes that include group IIB introns.

It localises to the mitochondrion. Its function is as follows. May be involved in the splicing of group IIB introns in mitochondria. This Oryza sativa subsp. japonica (Rice) protein is CRS2-associated factor 2, mitochondrial.